A 71-amino-acid polypeptide reads, in one-letter code: Small ribosomal subunit protein eS31 (71 aa).

Zn(2+) is bound by residues Cys-35, Cys-38, Cys-53, and Cys-56. The C4-type zinc-finger motif lies at 35 to 56; sequence CPKCGAGVFMAEHLNRYACGKC.

Belongs to the eukaryotic ribosomal protein eS31 family. In terms of assembly, part of the 30S ribosomal subunit. The cofactor is Zn(2+).

This is Small ribosomal subunit protein eS31 from Methanococcus vannielii (strain ATCC 35089 / DSM 1224 / JCM 13029 / OCM 148 / SB).